We begin with the raw amino-acid sequence, 210 residues long: Glutathione S-transferase P (210 aa).

The GST N-terminal domain occupies proline 2–glycine 81. At tyrosine 4 the chain carries Phosphotyrosine; by EGFR. Glutathione contacts are provided by residues tyrosine 8, arginine 14, tryptophan 39, lysine 45, and glutamine 52–leucine 53. Threonine 62 carries the phosphothreonine modification. Position 65–66 (glutamine 65–serine 66) interacts with glutathione. Residues aspartate 83 to isoleucine 204 enclose the GST C-terminal domain. Lysine 103 and lysine 116 each carry N6-succinyllysine. Position 128 is an N6-acetyllysine (lysine 128).

Belongs to the GST superfamily. Pi family. As to quaternary structure, homodimer. Interacts with CDK5.

It localises to the cytoplasm. Its subcellular location is the mitochondrion. The protein resides in the nucleus. It carries out the reaction RX + glutathione = an S-substituted glutathione + a halide anion + H(+). The catalysed reaction is prostaglandin J2 + glutathione = prostaglandin J2-S-(R)-glutathione. The enzyme catalyses prostaglandin J2 + glutathione = prostaglandin J2-S-(S)-glutathione. It catalyses the reaction prostaglandin A2 + glutathione = prostaglandin A2-S-(S)-glutathione. It carries out the reaction 11(S)-hydroxy-14(S),15(S)-epoxy-(5Z,8Z,12E)-eicosatrienoate + glutathione = (11S,15S)-dihydroxy-14(R)-S-glutathionyl-(5Z,8Z,12E)-eicosatrienoate. In terms of biological role, conjugation of reduced glutathione to a wide number of exogenous and endogenous hydrophobic electrophiles. Involved in the formation of glutathione conjugates of both prostaglandin A2 (PGA2) and prostaglandin J2 (PGJ2). Participates in the formation of novel hepoxilin regioisomers. Negatively regulates CDK5 activity via p25/p35 translocation to prevent neurodegeneration. The sequence is that of Glutathione S-transferase P (GSTP1) from Cricetulus longicaudatus (Long-tailed dwarf hamster).